The primary structure comprises 346 residues: Methylthioribose-1-phosphate isomerase (346 aa).

Residues 46 to 48 (RGA), Arg-89, and Gln-196 contribute to the substrate site. Catalysis depends on Asp-237, which acts as the Proton donor. Residue 247 to 248 (NK) coordinates substrate.

This sequence belongs to the eIF-2B alpha/beta/delta subunits family. MtnA subfamily.

The catalysed reaction is 5-(methylsulfanyl)-alpha-D-ribose 1-phosphate = 5-(methylsulfanyl)-D-ribulose 1-phosphate. The protein operates within amino-acid biosynthesis; L-methionine biosynthesis via salvage pathway; L-methionine from S-methyl-5-thio-alpha-D-ribose 1-phosphate: step 1/6. Its function is as follows. Catalyzes the interconversion of methylthioribose-1-phosphate (MTR-1-P) into methylthioribulose-1-phosphate (MTRu-1-P). The protein is Methylthioribose-1-phosphate isomerase of Citrifermentans bemidjiense (strain ATCC BAA-1014 / DSM 16622 / JCM 12645 / Bem) (Geobacter bemidjiensis).